We begin with the raw amino-acid sequence, 302 residues long: Probable lipid kinase YegS-like (302 aa).

In terms of domain architecture, DAGKc spans 1-129 (MDKDKVLLVL…IDLGEVNGKL (129 aa)). ATP contacts are provided by residues threonine 39, 65-71 (GDGTLRE), and threonine 92. Arginine 210, aspartate 213, and leucine 215 together coordinate Mg(2+). Glutamate 268 acts as the Proton acceptor in catalysis.

This sequence belongs to the diacylglycerol/lipid kinase family. YegS lipid kinase subfamily. Mg(2+) is required as a cofactor. Requires Ca(2+) as cofactor.

It is found in the cytoplasm. Functionally, probably phosphorylates lipids; the in vivo substrate is unknown. This Pseudomonas aeruginosa (strain ATCC 15692 / DSM 22644 / CIP 104116 / JCM 14847 / LMG 12228 / 1C / PRS 101 / PAO1) protein is Probable lipid kinase YegS-like.